Here is a 181-residue protein sequence, read N- to C-terminus: Probable pyruvoyl-dependent arginine decarboxylase (181 aa).

A Pyruvic acid (Ser) modification is found at serine 43.

This sequence belongs to the PdaD family. Pyruvate serves as cofactor.

The catalysed reaction is L-arginine + H(+) = agmatine + CO2. This chain is Probable pyruvoyl-dependent arginine decarboxylase, found in Chlorobium phaeobacteroides (strain BS1).